Consider the following 132-residue polypeptide: Small ribosomal subunit protein eS17B (132 aa).

Phosphoserine is present on S43.

This sequence belongs to the eukaryotic ribosomal protein eS17 family. In terms of assembly, component of the small ribosomal subunit (SSU). Mature yeast ribosomes consist of a small (40S) and a large (60S) subunit. The 40S small subunit contains 1 molecule of ribosomal RNA (18S rRNA) and at least 33 different proteins. The large 60S subunit contains 3 rRNA molecules (25S, 5.8S and 5S rRNA) and at least 46 different proteins.

It is found in the cytoplasm. Component of the ribosome, a large ribonucleoprotein complex responsible for the synthesis of proteins in the cell. The small ribosomal subunit (SSU) binds messenger RNAs (mRNAs) and translates the encoded message by selecting cognate aminoacyl-transfer RNA (tRNA) molecules. The large subunit (LSU) contains the ribosomal catalytic site termed the peptidyl transferase center (PTC), which catalyzes the formation of peptide bonds, thereby polymerizing the amino acids delivered by tRNAs into a polypeptide chain. The nascent polypeptides leave the ribosome through a tunnel in the LSU and interact with protein factors that function in enzymatic processing, targeting, and the membrane insertion of nascent chains at the exit of the ribosomal tunnel. The polypeptide is Small ribosomal subunit protein eS17B (rps1702) (Schizosaccharomyces pombe (strain 972 / ATCC 24843) (Fission yeast)).